Here is an 89-residue protein sequence, read N- to C-terminus: Large ribosomal subunit protein eL34 (89 aa).

The tract at residues 41–69 (RPLNGVPRGRPSELRKLPKTAKRPERPYP) is disordered. Residues 50–66 (RPSELRKLPKTAKRPER) show a composition bias toward basic and acidic residues.

It belongs to the eukaryotic ribosomal protein eL34 family.

The sequence is that of Large ribosomal subunit protein eL34 from Thermococcus gammatolerans (strain DSM 15229 / JCM 11827 / EJ3).